A 169-amino-acid polypeptide reads, in one-letter code: Queuosine precursor transporter QueT (169 aa).

5 helical membrane-spanning segments follow: residues 9-29 (IVTIAIVAALYVILTMTPGLS), 44-64 (LNFTAFFNKKYIIAVTIGCMI), 73-93 (VDVIVGGLSTLVFLSLGVLLF), 110-130 (FFFFAIFFSISMFTIALELKF), and 137-157 (LLTWGTLALGEFASLFIGAFI).

Belongs to the vitamin uptake transporter (VUT/ECF) (TC 2.A.88) family. In E.coli forms a stable energy-coupling factor (ECF) transporter complex composed of 2 membrane-embedded substrate-binding protein (S component), 2 ATP-binding proteins (A and A' components) and 2 transmembrane proteins (T component), probably with a stoichiometry of 2:1:1:2. May be able to interact with more than 1 S component at a time.

The protein localises to the cell membrane. In terms of biological role, probably a queuosine precursor-binding protein that interacts with the energy-coupling factor (ECF) ABC-transporter complex. Unlike classic ABC transporters this ECF transporter provides the energy necessary to transport a number of different substrates. The substrates themselves are bound by transmembrane, not extracytoplasmic soluble proteins. The chain is Queuosine precursor transporter QueT (queT) from Lactococcus lactis subsp. cremoris (strain MG1363).